The following is a 187-amino-acid chain: UPF0301 protein YqgE (187 aa).

It belongs to the UPF0301 (AlgH) family.

The polypeptide is UPF0301 protein YqgE (Salmonella paratyphi A (strain ATCC 9150 / SARB42)).